Here is a 184-residue protein sequence, read N- to C-terminus: uncharacterized protein (184 aa).

The N-terminal stretch at 1 to 20 is a signal peptide; the sequence is MTLRKILALTCLLLPMMASA.

This sequence to H.influenzae HI_0045.

It is found in the periplasm. This is an uncharacterized protein from Escherichia coli (strain K12).